Here is a 231-residue protein sequence, read N- to C-terminus: Membrane protein YknW (231 aa).

The next 5 helical transmembrane spans lie at 38–58 (VWGP…LQSL), 93–113 (GAII…WLCV), 128–148 (LSLF…IVAF), 171–191 (LASV…LLAI), and 205–225 (WISA…SGLI).

In terms of assembly, interacts with a complex composed of YknX, YknY and YknZ.

Its subcellular location is the cell membrane. Functionally, part of an unusual four-component transporter, which is required for protection against the killing factor SdpC (sporulation-delaying protein). Has a role in the assembly of the YknXYZ complex. In Bacillus subtilis (strain 168), this protein is Membrane protein YknW (yknW).